Reading from the N-terminus, the 864-residue chain is Paramyosin (864 aa).

The tract at residues 1–30 (MSSLYRDLDSDVSSTRIVRHSYNVYRGSSP) is nonhelical region. Positions 31–853 (SSQNRLESRI…QTVRRSRSMS (823 aa)) form a coiled coil. The nonhelical region stretch occupies residues 854–864 (VSREVTRVVRV).

This sequence belongs to the paramyosin family. In terms of assembly, homodimer. Post-translationally, phosphorylated. As to expression, most abundantly expressed in muscle tissues from byssus retractor and adductor muscles. Low expression in foot, gill, inner mantle and outer mantle.

The protein localises to the cytoplasm. The protein resides in the myofibril. Paramyosin is a major structural component of many thick filaments isolated from invertebrate muscles. The chain is Paramyosin from Mytilus galloprovincialis (Mediterranean mussel).